We begin with the raw amino-acid sequence, 76 residues long: Dermaseptin-SP2 (76 aa).

Residues 1-22 form the signal peptide; it reads MAFLKKSLFLVLFLGLVSLSIC. A propeptide spanning residues 23-45 is cleaved from the precursor; it reads EEEKRENEDEEEQEDEEQSEEKR. Positions 24-44 are disordered; sequence EEKRENEDEEEQEDEEQSEEK. Over residues 30 to 41 the composition is skewed to acidic residues; it reads EDEEEQEDEEQS. A Glutamine amide modification is found at glutamine 73. Residues 74–76 constitute a propeptide that is removed on maturation; it reads GEQ.

Expressed by the skin glands.

It localises to the secreted. It is found in the target cell membrane. Functionally, antimicrobial peptide with activity against Gram-positive and Gram-negative bacteria and fungi. Has been tested against E.coli (MIC=2.68-8 uM), S.aureus (ATCC 25923, MIC=2.68-8 uM), S.aureus (ATCC oxacillin resistant, MIC=2.68 uM), K.pneumoniae (MIC=10.71 uM) and C.albicans (MIC=10.71-32 uM). Probably acts by disturbing membrane functions with its alpha-helical amphipathic structure. May penetrate bacterial membranes, but stay at the mammalian membrane surface. Shows a very weak hemolytic activity. The chain is Dermaseptin-SP2 from Agalychnis spurrelli (Gliding leaf frog).